Consider the following 213-residue polypeptide: UPF0056 membrane protein AF_2111 (213 aa).

The next 6 helical transmembrane spans lie at 1 to 21 (MDIA…FIII), 51 to 71 (IIAF…LDYF), 75 to 95 (ISSL…DILL), 118 to 138 (VFPL…GIVL), 142 to 162 (AGDV…YSIV), and 181 to 201 (ADIA…EFVF).

Belongs to the UPF0056 (MarC) family.

It is found in the cell membrane. The protein is UPF0056 membrane protein AF_2111 of Archaeoglobus fulgidus (strain ATCC 49558 / DSM 4304 / JCM 9628 / NBRC 100126 / VC-16).